The sequence spans 255 residues: S-adenosyl-L-methionine-dependent uroporphyrinogen III methyltransferase (255 aa).

Residues Pro-15, 91–93 (GGD), 121–122 (TS), Met-175, and Ala-232 contribute to the S-adenosyl-L-homocysteine site.

The protein belongs to the precorrin methyltransferase family. As to quaternary structure, homodimer.

It carries out the reaction uroporphyrinogen III + 2 S-adenosyl-L-methionine = precorrin-2 + 2 S-adenosyl-L-homocysteine + H(+). The protein operates within porphyrin-containing compound metabolism; siroheme biosynthesis; precorrin-2 from uroporphyrinogen III: step 1/1. Functionally, involved in the archaeal biosynthesis of heme. Catalyzes the methylation of carbons 2 and 7 of uroporphyrinogen-III (UROGEN) to yield precorrin-2. It does not catalyze the overmethylation of precorrin-2 to trimethylpyrrocorphin. The sequence is that of S-adenosyl-L-methionine-dependent uroporphyrinogen III methyltransferase from Methanosarcina barkeri (strain Fusaro / DSM 804).